The following is a 670-amino-acid chain: Soluble lamin-associated protein of 75 kDa (670 aa).

2 disordered regions span residues 273 to 301 and 314 to 670; these read PKRP…SSEM and STSE…AKLT. The residue at position 350 (serine 350) is a Phosphoserine. Polar residues predominate over residues 358-375; it reads SQTSLTASINKLESTARP. Positions 378-387 are enriched in acidic residues; it reads SSEEFLEEEP. At serine 379 the chain carries Phosphoserine. Residues 414 to 423 are compositionally biased toward basic and acidic residues; the sequence is EKQDGEKESE. A compositionally biased stretch (acidic residues) spans 442–453; it reads TEEEDSTSEVLD. Residue serine 449 is modified to Phosphoserine. Residues 460-470 show a composition bias toward polar residues; sequence PFNSSEDSTNL. Basic and acidic residues-rich tracts occupy residues 479–494 and 504–514; these read KPPE…RIPD and SDEKGHMEEKL. Serine 515 is subject to Phosphoserine. Composition is skewed to polar residues over residues 558-569 and 579-591; these read ENLSPNTTSSLE and PQET…QSSL. Serine 615, serine 618, and serine 635 each carry phosphoserine. Basic residues predominate over residues 651–670; sequence NLRRKAKGHKGPAKKKAKLT.

The protein belongs to the FAM169 family.

The protein resides in the nucleus envelope. It localises to the nucleus inner membrane. This Homo sapiens (Human) protein is Soluble lamin-associated protein of 75 kDa (FAM169A).